Consider the following 106-residue polypeptide: Iron-sulfur cluster assembly protein CyaY (106 aa).

It belongs to the frataxin family.

Involved in iron-sulfur (Fe-S) cluster assembly. May act as a regulator of Fe-S biogenesis. The sequence is that of Iron-sulfur cluster assembly protein CyaY from Salmonella arizonae (strain ATCC BAA-731 / CDC346-86 / RSK2980).